Reading from the N-terminus, the 298-residue chain is ATP phosphoribosyltransferase (298 aa).

It belongs to the ATP phosphoribosyltransferase family. Long subfamily. Requires Mg(2+) as cofactor.

The protein localises to the cytoplasm. The enzyme catalyses 1-(5-phospho-beta-D-ribosyl)-ATP + diphosphate = 5-phospho-alpha-D-ribose 1-diphosphate + ATP. Its pathway is amino-acid biosynthesis; L-histidine biosynthesis; L-histidine from 5-phospho-alpha-D-ribose 1-diphosphate: step 1/9. Feedback inhibited by histidine. Catalyzes the condensation of ATP and 5-phosphoribose 1-diphosphate to form N'-(5'-phosphoribosyl)-ATP (PR-ATP). Has a crucial role in the pathway because the rate of histidine biosynthesis seems to be controlled primarily by regulation of HisG enzymatic activity. In Aeromonas salmonicida (strain A449), this protein is ATP phosphoribosyltransferase.